The chain runs to 350 residues: Phospho-2-dehydro-3-deoxyheptonate aldolase, Phe-sensitive (350 aa).

Lys244 bears the N6-acetyllysine mark.

Belongs to the class-I DAHP synthase family. In terms of assembly, homotetramer.

The enzyme catalyses D-erythrose 4-phosphate + phosphoenolpyruvate + H2O = 7-phospho-2-dehydro-3-deoxy-D-arabino-heptonate + phosphate. It functions in the pathway metabolic intermediate biosynthesis; chorismate biosynthesis; chorismate from D-erythrose 4-phosphate and phosphoenolpyruvate: step 1/7. In terms of biological role, stereospecific condensation of phosphoenolpyruvate (PEP) and D-erythrose-4-phosphate (E4P) giving rise to 3-deoxy-D-arabino-heptulosonate-7-phosphate (DAHP). The sequence is that of Phospho-2-dehydro-3-deoxyheptonate aldolase, Phe-sensitive (aroG) from Escherichia coli O157:H7.